Consider the following 137-residue polypeptide: Nucleoside diphosphate kinase (137 aa).

Residues Lys-9, Phe-57, Arg-85, Thr-91, Arg-102, and Asn-112 each coordinate ATP. The active-site Pros-phosphohistidine intermediate is His-115.

Belongs to the NDK family. As to quaternary structure, homotetramer. Mg(2+) is required as a cofactor.

Its subcellular location is the cytoplasm. The enzyme catalyses a 2'-deoxyribonucleoside 5'-diphosphate + ATP = a 2'-deoxyribonucleoside 5'-triphosphate + ADP. The catalysed reaction is a ribonucleoside 5'-diphosphate + ATP = a ribonucleoside 5'-triphosphate + ADP. In terms of biological role, major role in the synthesis of nucleoside triphosphates other than ATP. The ATP gamma phosphate is transferred to the NDP beta phosphate via a ping-pong mechanism, using a phosphorylated active-site intermediate. This chain is Nucleoside diphosphate kinase, found in Nitratiruptor sp. (strain SB155-2).